The chain runs to 328 residues: Phosphate acyltransferase (328 aa).

Belongs to the PlsX family. In terms of assembly, homodimer. Probably interacts with PlsY.

The protein localises to the cytoplasm. The catalysed reaction is a fatty acyl-[ACP] + phosphate = an acyl phosphate + holo-[ACP]. It functions in the pathway lipid metabolism; phospholipid metabolism. In terms of biological role, catalyzes the reversible formation of acyl-phosphate (acyl-PO(4)) from acyl-[acyl-carrier-protein] (acyl-ACP). This enzyme utilizes acyl-ACP as fatty acyl donor, but not acyl-CoA. The chain is Phosphate acyltransferase from Staphylococcus aureus (strain Mu3 / ATCC 700698).